The primary structure comprises 702 residues: MA3 DOMAIN-CONTAINING TRANSLATION REGULATORY FACTOR 1 (702 aa).

Positions 39-66 are disordered; the sequence is LNIKSPTGGKGPVAGIPNRHVRRTHSGK. The segment covering 57-66 has biased composition (basic residues); it reads RHVRRTHSGK. An MI 1 domain is found at 122–243; that stretch reads DYKKSVVSII…PPVFLVRSKK (122 aa). The Nuclear localization signal 1 motif lies at 273-280; it reads EKKWGGST. MI domains lie at 286 to 407, 420 to 541, and 583 to 702; these read ETKK…TSDQ, QYKK…DIST, and DAKD…SATQ. The Nuclear localization signal 2 motif lies at 458–465; that stretch reads LKRLITLA.

The protein belongs to the PDCD4 family. Binds to EIF4A1, S6K1 and S6K2. The association with ribosomes is modulated by cellular energy status and TOR activity. Phosphorylation by S6 kinases (e.g. S6K1 and S6K2) is modulated by cellular energy status and TOR activity. As to expression, mostly expressed in vegetative tissues, such as leaves, roots and stems, and, to a lower extent, in reproductive tissues, such as flower buds and flowers.

The protein resides in the nucleus. Its subcellular location is the cytoplasm. The protein localises to the cytosol. Functionally, involved in target of rapamycin (TOR)-regulated translation control, especially under energy-deficient conditions. This is MA3 DOMAIN-CONTAINING TRANSLATION REGULATORY FACTOR 1 from Arabidopsis thaliana (Mouse-ear cress).